A 136-amino-acid chain; its full sequence is Putative pre-16S rRNA nuclease (136 aa).

It belongs to the YqgF nuclease family.

The protein localises to the cytoplasm. Its function is as follows. Could be a nuclease involved in processing of the 5'-end of pre-16S rRNA. The polypeptide is Putative pre-16S rRNA nuclease (Francisella tularensis subsp. novicida (strain U112)).